Consider the following 203-residue polypeptide: Thymidylate kinase (203 aa).

7–14 (GGEGAGKT) lines the ATP pocket.

It belongs to the thymidylate kinase family.

It carries out the reaction dTMP + ATP = dTDP + ADP. In terms of biological role, phosphorylation of dTMP to form dTDP in both de novo and salvage pathways of dTTP synthesis. In Chlamydia trachomatis serovar D (strain ATCC VR-885 / DSM 19411 / UW-3/Cx), this protein is Thymidylate kinase (tmk).